We begin with the raw amino-acid sequence, 349 residues long: PDZ and LIM domain protein 2 (349 aa).

The 84-residue stretch at 1–84 (MALTVNVVGP…PLRLQLDRSQ (84 aa)) folds into the PDZ domain. 2 disordered regions span residues 72 to 95 (SASP…NGEG) and 108 to 147 (LRTH…PIAL). 2 stretches are compositionally biased toward polar residues: residues 81–90 (DRSQTASPGQ) and 108–121 (LRTH…QRSA). Serine 124, serine 127, serine 129, serine 134, and serine 137 each carry phosphoserine. Residues threonine 138 and threonine 142 each carry the phosphothreonine modification. Residues serine 143 and serine 163 each carry the phosphoserine modification. 2 disordered regions span residues 168–212 (ATHH…SSLD) and 250–272 (ERGG…PTSR). Positions 176–192 (GQPTSQQAGHSSPSDST) are enriched in polar residues. Phosphoserine occurs at positions 199, 204, 205, 209, 210, and 263. A compositionally biased stretch (low complexity) spans 199–211 (SPGRPSSPRLSSL). Polar residues predominate over residues 260–270 (SSLSPKASLPT). The 61-residue stretch at 281–341 (HTCEKCSVNI…EKHARQRYSM (61 aa)) folds into the LIM zinc-binding domain.

In terms of assembly, interacts with alpha-actinins ACTN1 and ACTN4, FLNA and MYH9. Interacts (via LIM zinc-binding domain) with MKRN2. In terms of tissue distribution, highly expressed in cornea and lung. Expressed at intermediate level in sclera and combined tissues of the eye irido-corneal angle. Specifically expressed in the corneal epithelial cells but not in other corneal layers.

Its subcellular location is the cytoplasm. The protein resides in the cytoskeleton. Probable adapter protein located at the actin cytoskeleton that promotes cell attachment. Necessary for the migratory capacity of epithelial cells. Overexpression enhances cell adhesion to collagen and fibronectin and suppresses anchorage independent growth. May contribute to tumor cell migratory capacity. This is PDZ and LIM domain protein 2 (Pdlim2) from Rattus norvegicus (Rat).